The primary structure comprises 669 residues: Protein BNIP5 (669 aa).

4 disordered regions span residues 1–116 (MPRS…REAQ), 131–259 (IEEP…QDDV), 273–401 (QLEE…RASE), and 413–544 (LQSA…SPER). Over residues 34–47 (RSLDRQVPRKKDPE) the composition is skewed to basic and acidic residues. Over residues 48 to 73 (SSNTRCPSSATCRRTASDGARSSESP) the composition is skewed to polar residues. Basic and acidic residues-rich tracts occupy residues 104–113 (EDTKKERLPR) and 131–148 (IEEP…KGDL). Residues 158–175 (RKKSHEKRTSRKKHSHRK) are compositionally biased toward basic residues. Residues 285–295 (EAVPPRKPTPL) are compositionally biased toward pro residues. Residue K314 forms a Glycyl lysine isopeptide (Lys-Gly) (interchain with G-Cter in SUMO2) linkage. Polar residues predominate over residues 346-357 (VSSQRASTSSSL). Over residues 390–401 (PEEKPLLDRASE) the composition is skewed to basic and acidic residues. A compositionally biased stretch (basic residues) spans 445-462 (SQVKKSNLRRAFSLRKHS). Positions 516–528 (AAGGAPAGSPGAP) are enriched in low complexity.

The sequence is that of Protein BNIP5 (Bnip5) from Mus musculus (Mouse).